The sequence spans 219 residues: 2-hydroxy-3-keto-5-methylthiopentenyl-1-phosphate phosphatase (219 aa).

The protein belongs to the HAD-like hydrolase superfamily. MtnX family.

It carries out the reaction 2-hydroxy-5-methylsulfanyl-3-oxopent-1-enyl phosphate + H2O = 1,2-dihydroxy-5-(methylsulfanyl)pent-1-en-3-one + phosphate. Its pathway is amino-acid biosynthesis; L-methionine biosynthesis via salvage pathway; L-methionine from S-methyl-5-thio-alpha-D-ribose 1-phosphate: step 4/6. Functionally, dephosphorylates 2-hydroxy-3-keto-5-methylthiopentenyl-1-phosphate (HK-MTPenyl-1-P) yielding 1,2-dihydroxy-3-keto-5-methylthiopentene (DHK-MTPene). In Bacillus cereus (strain ZK / E33L), this protein is 2-hydroxy-3-keto-5-methylthiopentenyl-1-phosphate phosphatase.